Consider the following 421-residue polypeptide: Threonine--tRNA ligase editing subunit (421 aa).

It belongs to the class-II aminoacyl-tRNA synthetase family. Archaea-specific ThrRS editing domain subfamily. Probably interacts with its catalytic subunit.

The protein resides in the cytoplasm. In terms of biological role, freestanding tRNA editing subunit of threonine--tRNA ligase, the catalytic subunit is probably AC Q9YDW0. Deacylates (edits) mischarged L-seryl-tRNA(Thr) in trans; has no activity on correctly charged L-threonyl-tRNA(Thr). Probably does not aminoacylate tRNA(Thr). Deacylates correctly charged glycyl-tRNA(Gly), but not glycyl-tRNA(Gly)(2'-dA76) (the terminal 2'-OH of tRNA adenine 76 has been dehydroxylated) nor the 2'-fluoro tRNA derivative, strongly suggesting the editing function is catalyzed by the 2'-OH of A76 of tRNA(Thr). The protein is Threonine--tRNA ligase editing subunit (thrS2) of Aeropyrum pernix (strain ATCC 700893 / DSM 11879 / JCM 9820 / NBRC 100138 / K1).